Here is a 93-residue protein sequence, read N- to C-terminus: UPF0298 protein LMHCC_0506 (93 aa).

It belongs to the UPF0298 family.

It is found in the cytoplasm. This chain is UPF0298 protein LMHCC_0506, found in Listeria monocytogenes serotype 4a (strain HCC23).